Reading from the N-terminus, the 173-residue chain is ATP synthase subunit b (173 aa).

Residues 15-35 (GVEWGTVIVQVLTFIVLLALL) traverse the membrane as a helical segment.

It belongs to the ATPase B chain family. As to quaternary structure, F-type ATPases have 2 components, F(1) - the catalytic core - and F(0) - the membrane proton channel. F(1) has five subunits: alpha(3), beta(3), gamma(1), delta(1), epsilon(1). F(0) has three main subunits: a(1), b(2) and c(10-14). The alpha and beta chains form an alternating ring which encloses part of the gamma chain. F(1) is attached to F(0) by a central stalk formed by the gamma and epsilon chains, while a peripheral stalk is formed by the delta and b chains.

It localises to the cell membrane. Functionally, f(1)F(0) ATP synthase produces ATP from ADP in the presence of a proton or sodium gradient. F-type ATPases consist of two structural domains, F(1) containing the extramembraneous catalytic core and F(0) containing the membrane proton channel, linked together by a central stalk and a peripheral stalk. During catalysis, ATP synthesis in the catalytic domain of F(1) is coupled via a rotary mechanism of the central stalk subunits to proton translocation. Component of the F(0) channel, it forms part of the peripheral stalk, linking F(1) to F(0). The chain is ATP synthase subunit b from Staphylococcus aureus (strain MRSA252).